The sequence spans 173 residues: RNA pyrophosphohydrolase (173 aa).

In terms of domain architecture, Nudix hydrolase spans 6–149 (GYRPNVGIIL…KRHVYRRALR (144 aa)). A Nudix box motif is present at residues 38–59 (GGIRRDESPLDAMYRELAEETG).

Belongs to the Nudix hydrolase family. RppH subfamily. A divalent metal cation is required as a cofactor.

Its function is as follows. Accelerates the degradation of transcripts by removing pyrophosphate from the 5'-end of triphosphorylated RNA, leading to a more labile monophosphorylated state that can stimulate subsequent ribonuclease cleavage. In Thioalkalivibrio sulfidiphilus (strain HL-EbGR7), this protein is RNA pyrophosphohydrolase.